The primary structure comprises 128 residues: L-ectoine synthase (128 aa).

This sequence belongs to the ectoine synthase family.

The enzyme catalyses (2S)-4-acetamido-2-aminobutanoate = L-ectoine + H2O. Its pathway is amine and polyamine biosynthesis; ectoine biosynthesis; L-ectoine from L-aspartate 4-semialdehyde: step 3/3. In terms of biological role, catalyzes the circularization of gamma-N-acetyl-alpha,gamma-diaminobutyric acid (ADABA) to ectoine (1,4,5,6-tetrahydro-2-methyl-4-pyrimidine carboxylic acid), which is an excellent osmoprotectant. The sequence is that of L-ectoine synthase from Virgibacillus pantothenticus.